The sequence spans 420 residues: MALSSLLRSAATSAAAPRVELYPSSSYNHSQVTSSLGFSHSLTSSRFSGAAVSTGKYNAKRVQPIKATATEAPPAVHRSRSSGKTKVGINGFGRIGRLVLRIATFRDDIEVVAVNDPFIDAKYMAYMFKYDSTHGNYKGTINVIDDSTLEINGKQVKVVSKRDPAEIPWADLGAEYVVESSGVFTTVGQASSHLKGGAKKVIISAPSADAPMFVVGVNEKTYLPNMDIVSNASCTTNCLAPLAKVVHEEFGILEGLMTTVHATTATQKTVDGPSMKDWRGGRGASQNIIPSSTGAAKAVGKVLPELNGKLTGMAFRVPTPNVSVVDLTCRLEKDASYEDVKAAIKFASEGPLRGILGYTEEDVVSNDFLGDSRSSIFDANAGIGLSKSFMKLVSWYDNEWGYSNRVLDLIEHMALVAASR.

The N-terminal 66 residues, 1–66 (MALSSLLRSA…YNAKRVQPIK (66 aa)), are a transit peptide targeting the chloroplast. NAD(+) is bound by residues 94–95 (RI), aspartate 116, and arginine 162. D-glyceraldehyde 3-phosphate is bound by residues 233 to 235 (SCT), threonine 264, 293 to 294 (TG), and arginine 316. Residue cysteine 234 is the Nucleophile of the active site. Asparagine 398 contacts NAD(+).

This sequence belongs to the glyceraldehyde-3-phosphate dehydrogenase family. As to quaternary structure, homotetramer. In terms of tissue distribution, expressed in shoot and root vasculature, leaf veins and vascular tissue of flowers and siliques.

It is found in the plastid. Its subcellular location is the chloroplast stroma. The catalysed reaction is D-glyceraldehyde 3-phosphate + phosphate + NAD(+) = (2R)-3-phospho-glyceroyl phosphate + NADH + H(+). Its function is as follows. Involved in plastidial glycolytic pathway and plays a specific role in glycolytic energy production in non-green plastids and chloroplasts. Essential for breakdown of starch to form sucrose for export to non-photosynthetic tissues, and to generate primary metabolites for anabolic pathways such as fatty acid and amino acid synthesis. Plays an important role in plant development by providing substrates for the phosphorylated pathway of serine biosynthesis in roots. Plays a crucial role in pollen development. Functionally redundant with GAPCP1. The sequence is that of Glyceraldehyde-3-phosphate dehydrogenase GAPCP2, chloroplastic (GAPCP2) from Arabidopsis thaliana (Mouse-ear cress).